The sequence spans 350 residues: Alcohol dehydrogenase (350 aa).

Residue Cys46 participates in Zn(2+) binding. His47, Thr48, and His51 together coordinate NAD(+). Residues His69, Cys100, Cys103, Cys106, Cys114, and Cys156 each coordinate Zn(2+). NAD(+)-binding residues include Gly183, Gly184, Leu185, and Asp204. Thr205 is modified (phosphothreonine). 2 residues coordinate NAD(+): Lys209 and Phe224. Thr250 carries the phosphothreonine modification. The NAD(+) site is built by Val271, Met273, Ser296, Val298, and Arg343.

This sequence belongs to the zinc-containing alcohol dehydrogenase family. As to quaternary structure, homotetramer. Requires Zn(2+) as cofactor.

The protein localises to the cytoplasm. It catalyses the reaction a primary alcohol + NAD(+) = an aldehyde + NADH + H(+). The catalysed reaction is a secondary alcohol + NAD(+) = a ketone + NADH + H(+). The enzyme catalyses ethanol + NAD(+) = acetaldehyde + NADH + H(+). Functionally, reduces acetaldehyde to ethanol during the fermentation of glucose. The protein is Alcohol dehydrogenase (adh1) of Schizosaccharomyces pombe (strain 972 / ATCC 24843) (Fission yeast).